Here is a 247-residue protein sequence, read N- to C-terminus: Segregation and condensation protein A (247 aa).

Belongs to the ScpA family. In terms of assembly, component of a cohesin-like complex composed of ScpA, ScpB and the Smc homodimer, in which ScpA and ScpB bind to the head domain of Smc. The presence of the three proteins is required for the association of the complex with DNA.

Its subcellular location is the cytoplasm. Functionally, participates in chromosomal partition during cell division. May act via the formation of a condensin-like complex containing Smc and ScpB that pull DNA away from mid-cell into both cell halves. This is Segregation and condensation protein A from Caldanaerobacter subterraneus subsp. tengcongensis (strain DSM 15242 / JCM 11007 / NBRC 100824 / MB4) (Thermoanaerobacter tengcongensis).